The following is a 309-amino-acid chain: Tagatose-6-phosphate kinase (309 aa).

This sequence belongs to the carbohydrate kinase PfkB family. LacC subfamily.

The catalysed reaction is D-tagatofuranose 6-phosphate + ATP = D-tagatofuranose 1,6-bisphosphate + ADP + H(+). The protein operates within carbohydrate metabolism; D-tagatose 6-phosphate degradation; D-glyceraldehyde 3-phosphate and glycerone phosphate from D-tagatose 6-phosphate: step 1/2. This is Tagatose-6-phosphate kinase from Streptococcus sanguinis (strain SK36).